We begin with the raw amino-acid sequence, 125 residues long: DNA-directed RNA polymerase II subunit RPB9 (125 aa).

Met-1 bears the N-acetylmethionine mark. Cys-17, Cys-20, Cys-39, Cys-42, Cys-86, Cys-89, Cys-114, and Cys-119 together coordinate Zn(2+). Residues 17–42 (CQECNNMLYPKEDKENRILLYACRNC) form a C4-type zinc finger. Residues 82 to 124 (EDHPCQKCGHKEAVFFQSHSARAEDAMRLYYVCTAPHCGHRWT) form a TFIIS-type zinc finger.

Belongs to the archaeal RpoM/eukaryotic RPA12/RPB9/RPC11 RNA polymerase family. Component of the RNA polymerase II (Pol II) core complex consisting of 12 subunits: a ten-subunit catalytic core composed of POLR2A/RPB1, POLR2B/RPB2, POLR2C/RPB3, POLR2I/RPB9, POLR2J/RPB11, POLR2E/RPABC1, POLR2F/RPABC2, POLR2H/RPABC3, POLR2K/RPABC4 and POLR2L/RPABC5 and a mobile stalk composed of two subunits POLR2D/RPB4 and POLR2G/RPB7, protruding from the core and functioning primarily in transcription initiation. Part of Pol II(G) complex, in which Pol II core associates with an additional subunit POLR2M; unlike conventional Pol II, Pol II(G) functions as a transcriptional repressor. Part of TBP-based Pol II pre-initiation complex (PIC), in which Pol II core assembles with general transcription factors and other specific initiation factors including GTF2E1, GTF2E2, GTF2F1, GTF2F2, TCEA1, ERCC2, ERCC3, GTF2H2, GTF2H3, GTF2H4, GTF2H5, GTF2A1, GTF2A2, GTF2B and TBP; this large multi-subunit PIC complex mediates DNA unwinding and targets Pol II core to the transcription start site where the first phosphodiester bond forms.

The protein localises to the nucleus. Its subcellular location is the nucleolus. Its function is as follows. DNA-dependent RNA polymerase catalyzes the transcription of DNA into RNA using the four ribonucleoside triphosphates as substrates. Component of RNA polymerase II which synthesizes mRNA precursors and many functional non-coding RNAs. Pol II is the central component of the basal RNA polymerase II transcription machinery. It is composed of mobile elements that move relative to each other. POLR2I/RPB9 is part of the upper jaw surrounding the central large cleft and thought to grab the incoming DNA template. This Bos taurus (Bovine) protein is DNA-directed RNA polymerase II subunit RPB9 (POLR2I).